Reading from the N-terminus, the 137-residue chain is Protein cornichon homolog 3 (137 aa).

Transmembrane regions (helical) follow at residues 8–28, 54–74, and 113–133; these read IISF…LISL, ILQG…MALL, and LAYI…STLD.

This sequence belongs to the cornichon family.

The protein localises to the membrane. The protein is Protein cornichon homolog 3 of Arabidopsis thaliana (Mouse-ear cress).